Here is a 467-residue protein sequence, read N- to C-terminus: Geranylgeranyl diphosphate reductase, chloroplastic (467 aa).

The N-terminal 43 residues, 1 to 43 (MATTVTLKSFTGLRQSSTEQTNFVSHVPSSLSLPQRRTSLRVT), are a transit peptide targeting the chloroplast.

The protein belongs to the geranylgeranyl reductase family. ChlP subfamily. Part of the FLU-containing chloroplast membrane complex composed of FLU, CRD1, PORB, PORC, CHLP and HEMA1.

It localises to the plastid. Its subcellular location is the chloroplast membrane. It catalyses the reaction phytyl diphosphate + 3 NADP(+) = geranylgeranyl diphosphate + 3 NADPH + 3 H(+). Its pathway is porphyrin-containing compound metabolism; chlorophyll biosynthesis. It functions in the pathway cofactor biosynthesis; tocopherol biosynthesis. Its function is as follows. Catalyzes the reduction of geranylgeranyl diphosphate to phytyl diphosphate, providing phytol for both tocopherol and chlorophyll synthesis. The sequence is that of Geranylgeranyl diphosphate reductase, chloroplastic (CHLP) from Arabidopsis thaliana (Mouse-ear cress).